A 250-amino-acid polypeptide reads, in one-letter code: 2,3-bisphosphoglycerate-dependent phosphoglycerate mutase (250 aa).

Substrate-binding positions include 10 to 17 (RHGESQWN), 23 to 24 (TG), R62, 89 to 92 (ERHY), K100, 116 to 117 (RR), and 185 to 186 (GN). The active-site Tele-phosphohistidine intermediate is the H11. E89 (proton donor/acceptor) is an active-site residue.

Belongs to the phosphoglycerate mutase family. BPG-dependent PGAM subfamily. Homodimer.

The enzyme catalyses (2R)-2-phosphoglycerate = (2R)-3-phosphoglycerate. The protein operates within carbohydrate degradation; glycolysis; pyruvate from D-glyceraldehyde 3-phosphate: step 3/5. Functionally, catalyzes the interconversion of 2-phosphoglycerate and 3-phosphoglycerate. The protein is 2,3-bisphosphoglycerate-dependent phosphoglycerate mutase of Shigella dysenteriae serotype 1 (strain Sd197).